Here is a 96-residue protein sequence, read N- to C-terminus: Cytochrome c oxidase assembly factor 3 homolog, mitochondrial (96 aa).

Residues 1–50 lie on the Mitochondrial matrix side of the membrane; that stretch reads MSSQGEPKPEAQFAKRIDPTKEALTKEQLQFIRQVEMAQWKKKTDKLRGR. The chain crosses the membrane as a helical span at residues 51-73; it reads NVATGLAIGAVVLGIYGYTFYSV. Over 74–96 the chain is Mitochondrial intermembrane; the sequence is SQEKIMDEIDEEAKVRVPKTGAN.

It belongs to the COA3 family. In terms of assembly, core component of the MITRAC (mitochondrial translation regulation assembly intermediate of cytochrome c oxidase complex) complex.

It localises to the mitochondrion inner membrane. Its function is as follows. Core component of the MITRAC (mitochondrial translation regulation assembly intermediate of cytochrome c oxidase complex) complex, that regulates cytochrome c oxidase assembly. MITRAC complexes regulate both translation of mitochondrial encoded components and assembly of nuclear-encoded components imported in mitochondrion. Required for efficient translation of MT-CO1 and mitochondrial respiratory chain complex IV assembly. The protein is Cytochrome c oxidase assembly factor 3 homolog, mitochondrial (coa3a) of Danio rerio (Zebrafish).